A 491-amino-acid chain; its full sequence is Glutamyl-tRNA(Gln) amidotransferase subunit A (491 aa).

Active-site charge relay system residues include K79 and S154. S178 functions as the Acyl-ester intermediate in the catalytic mechanism.

Belongs to the amidase family. GatA subfamily. In terms of assembly, heterotrimer of A, B and C subunits.

It catalyses the reaction L-glutamyl-tRNA(Gln) + L-glutamine + ATP + H2O = L-glutaminyl-tRNA(Gln) + L-glutamate + ADP + phosphate + H(+). In terms of biological role, allows the formation of correctly charged Gln-tRNA(Gln) through the transamidation of misacylated Glu-tRNA(Gln) in organisms which lack glutaminyl-tRNA synthetase. The reaction takes place in the presence of glutamine and ATP through an activated gamma-phospho-Glu-tRNA(Gln). The sequence is that of Glutamyl-tRNA(Gln) amidotransferase subunit A from Synechococcus sp. (strain CC9902).